The sequence spans 398 residues: Serine/threonine-protein kinase ppk23 (398 aa).

Residues 74 to 359 form the Protein kinase domain; the sequence is YEILEKIEEG…AKEALEHPYF (286 aa). Residues 80–88 and Lys-103 each bind ATP; that span reads IEEGSYGIV. The Proton acceptor role is filled by Asp-198. Positions 359–398 are disordered; that stretch reads FYESPRPKDPKFFPTFPSKAKGESKEKNVFQSFRSASPKK. Over residues 387 to 398 the composition is skewed to polar residues; that stretch reads VFQSFRSASPKK.

This sequence belongs to the protein kinase superfamily. Ser/Thr protein kinase family.

Its subcellular location is the nucleus. It catalyses the reaction L-seryl-[protein] + ATP = O-phospho-L-seryl-[protein] + ADP + H(+). The catalysed reaction is L-threonyl-[protein] + ATP = O-phospho-L-threonyl-[protein] + ADP + H(+). The protein is Serine/threonine-protein kinase ppk23 (ppk23) of Schizosaccharomyces pombe (strain 972 / ATCC 24843) (Fission yeast).